Here is a 362-residue protein sequence, read N- to C-terminus: Protein MGF 360-19R (362 aa).

An ANK repeat occupies 66-98 (LLNTALMKAVQDNNYELIKLFTEWGANINYGLI).

The protein belongs to the asfivirus MGF 360 family.

In terms of biological role, plays a role in virus cell tropism, and may be required for efficient virus replication in macrophages. This chain is Protein MGF 360-19R, found in Ornithodoros (relapsing fever ticks).